The chain runs to 213 residues: Thymidine kinase (213 aa).

ATP is bound by residues 20–27 and 93–96; these read GPMFSGKT and DEAQ. Catalysis depends on glutamate 94, which acts as the Proton acceptor. Zn(2+)-binding residues include cysteine 150, cysteine 153, cysteine 185, and histidine 188.

It belongs to the thymidine kinase family. As to quaternary structure, homotetramer.

Its subcellular location is the cytoplasm. The catalysed reaction is thymidine + ATP = dTMP + ADP + H(+). This is Thymidine kinase from Mycoplasma genitalium (strain ATCC 33530 / DSM 19775 / NCTC 10195 / G37) (Mycoplasmoides genitalium).